The chain runs to 363 residues: Ribosome-binding ATPase YchF (363 aa).

The OBG-type G domain occupies 3 to 256 (FKCGIVGLPN…LDDDEKIEFL (254 aa)). ATP is bound at residue 12-17 (NVGKST). Mg(2+) is bound by residues Ser-16 and Thr-36. A TGS domain is found at 278-361 (NLQTYFTAGV…QDGDVMHFRF (84 aa)).

It belongs to the TRAFAC class OBG-HflX-like GTPase superfamily. OBG GTPase family. YchF/OLA1 subfamily. The cofactor is Mg(2+).

In terms of biological role, ATPase that binds to both the 70S ribosome and the 50S ribosomal subunit in a nucleotide-independent manner. The sequence is that of Ribosome-binding ATPase YchF from Pasteurella multocida (strain Pm70).